Consider the following 47-residue polypeptide: Short transmembrane mitochondrial protein 1 (47 aa).

A helical membrane pass occupies residues 7 to 23 (GFTLGNVVGMYLAQNYD).

It belongs to the STMP1 family. Interacts with components of the ubiquinol-cytochrome c oxidoreductase (cytochrome b-c1 complex, complex III, CIII), such as UQCRC1/QCR1, UQCRC2/QCR2 and UQCR10/QCR9. Interacts with components of the cytochrome c oxidase (mitochondrial respiratory chain complex IV) complex, such as MT-CO2. In terms of tissue distribution, expressed in monocytes and dendritic cells.

The protein resides in the mitochondrion inner membrane. Its subcellular location is the mitochondrion outer membrane. It localises to the mitochondrion intermembrane space. Microprotein involved in mitochondrial respiratory chain complex III (ubiquinol-cytochrome c oxidoreductase) and complex IV (mitochondrial cytochrome c oxidase complex) assembly. Required for the formation of mitochondrial supercomplexes (SCs). Also required for the activation of the NLRP3 inflammasome. In Homo sapiens (Human), this protein is Short transmembrane mitochondrial protein 1.